Here is a 672-residue protein sequence, read N- to C-terminus: UvrABC system protein B (672 aa).

In terms of domain architecture, Helicase ATP-binding spans 26 to 181; the sequence is AGLEDGLAYQ…ILQRLAELQY (156 aa). 39-46 is a binding site for ATP; the sequence is GVTGSGKT. The short motif at 92-115 is the Beta-hairpin element; that stretch reads YYDYYQPEAYVPSSDTYIEKDASI. In terms of domain architecture, Helicase C-terminal spans 430–592; the sequence is QVDDLLSEIK…ITPKSIQKAV (163 aa). The region spanning 631–666 is the UVR domain; that stretch reads AKELRKLEEQMYHHARNLEFEEAAAVRDKIQHIRKG.

The protein belongs to the UvrB family. In terms of assembly, forms a heterotetramer with UvrA during the search for lesions. Interacts with UvrC in an incision complex.

The protein resides in the cytoplasm. The UvrABC repair system catalyzes the recognition and processing of DNA lesions. A damage recognition complex composed of 2 UvrA and 2 UvrB subunits scans DNA for abnormalities. Upon binding of the UvrA(2)B(2) complex to a putative damaged site, the DNA wraps around one UvrB monomer. DNA wrap is dependent on ATP binding by UvrB and probably causes local melting of the DNA helix, facilitating insertion of UvrB beta-hairpin between the DNA strands. Then UvrB probes one DNA strand for the presence of a lesion. If a lesion is found the UvrA subunits dissociate and the UvrB-DNA preincision complex is formed. This complex is subsequently bound by UvrC and the second UvrB is released. If no lesion is found, the DNA wraps around the other UvrB subunit that will check the other stand for damage. The protein is UvrABC system protein B of Coxiella burnetii (strain Dugway 5J108-111).